The following is a 156-amino-acid chain: Ribosomal RNA large subunit methyltransferase H (156 aa).

S-adenosyl-L-methionine is bound by residues L73, G104, and 123-128 (LSPLTL).

It belongs to the RNA methyltransferase RlmH family. Homodimer.

The protein resides in the cytoplasm. The catalysed reaction is pseudouridine(1915) in 23S rRNA + S-adenosyl-L-methionine = N(3)-methylpseudouridine(1915) in 23S rRNA + S-adenosyl-L-homocysteine + H(+). Specifically methylates the pseudouridine at position 1915 (m3Psi1915) in 23S rRNA. The sequence is that of Ribosomal RNA large subunit methyltransferase H from Photorhabdus laumondii subsp. laumondii (strain DSM 15139 / CIP 105565 / TT01) (Photorhabdus luminescens subsp. laumondii).